The sequence spans 244 residues: 6-carboxyhexanoate--CoA ligase (244 aa).

It belongs to the BioW family. Homodimer. The cofactor is Mg(2+).

The enzyme catalyses heptanedioate + ATP + CoA = 6-carboxyhexanoyl-CoA + AMP + diphosphate. It functions in the pathway metabolic intermediate metabolism; pimeloyl-CoA biosynthesis; pimeloyl-CoA from pimelate: step 1/1. Catalyzes the transformation of pimelate into pimeloyl-CoA with concomitant hydrolysis of ATP to AMP. The polypeptide is 6-carboxyhexanoate--CoA ligase (Hydrogenobacter thermophilus (strain DSM 6534 / IAM 12695 / TK-6)).